Reading from the N-terminus, the 576-residue chain is Proline--tRNA ligase (576 aa).

The protein belongs to the class-II aminoacyl-tRNA synthetase family. ProS type 1 subfamily. Homodimer.

Its subcellular location is the cytoplasm. The enzyme catalyses tRNA(Pro) + L-proline + ATP = L-prolyl-tRNA(Pro) + AMP + diphosphate. Catalyzes the attachment of proline to tRNA(Pro) in a two-step reaction: proline is first activated by ATP to form Pro-AMP and then transferred to the acceptor end of tRNA(Pro). As ProRS can inadvertently accommodate and process non-cognate amino acids such as alanine and cysteine, to avoid such errors it has two additional distinct editing activities against alanine. One activity is designated as 'pretransfer' editing and involves the tRNA(Pro)-independent hydrolysis of activated Ala-AMP. The other activity is designated 'posttransfer' editing and involves deacylation of mischarged Ala-tRNA(Pro). The misacylated Cys-tRNA(Pro) is not edited by ProRS. The sequence is that of Proline--tRNA ligase from Dechloromonas aromatica (strain RCB).